The primary structure comprises 134 residues: Histone H3-like centromeric protein A (134 aa).

Over residues 1–14 (MGPRRKPQTPRRRP) the composition is skewed to basic residues. The interval 1–34 (MGPRRKPQTPRRRPSSPAPGPSRQSSSVGSQTLR) is disordered. Gly-2 is modified (n,N,N-trimethylglycine). A phosphoserine mark is found at Ser-16 and Ser-22. An important for flexibility of DNA ends that protrude from nucleosomes region spans residues 34 to 48 (RRRQKFMWLKEIKTL). The H3-like stretch occupies residues 35–134 (RRQKFMWLKE…RIRGFEGGLP (100 aa)). Ser-62 is modified (phosphoserine). The tract at residues 69–110 (CEKFSRGVDFWWQAQALLALQEAAEAFLIHLFEDAYLLSLHA) is CATD.

Belongs to the histone H3 family. Component of centromeric nucleosomes, where DNA is wrapped around a histone octamer core. The octamer contains two molecules each of H2A, H2B, CENPA and H4 assembled in one CENPA-H4 heterotetramer and two H2A-H2B heterodimers. CENPA modulates the DNA-binding characteristics of nucleosomes so that protruding DNA ends have higher flexibility than in nucleosomes containing conventional histone H3. Inhibits binding of histone H1 to nucleosomes, since histone H1 binds preferentially to rigid DNA linkers that protrude from nucleosomes. Nucleosomes containing CENPA also contain histone H2A variants such as MACROH2A and H2A.Z/H2AZ1. The CENPA-H4 heterotetramer is more compact and structurally more rigid than corresponding H3-H4 heterotetramers. Can assemble into nucleosomes that contain both CENPA and histone H3.3; these nucleosomes interact with a single CENPC chain. Heterotrimer composed of HJURP, CENPA and histone H4, where HJURP interacts with the dimer formed by CENPA and histone H4 and prevents tetramerization of CENPA and H4. Component of the CENPA-NAC complex, at least composed of CENPA, CENPC, CENPH, CENPM, CENPN, CENPT and CENPU. Interacts (via CATD domain) with HJURP; the interaction is direct and is required for its localization to centromeres. Interacts with CENPC, CENPN and CENPT; interaction is direct. Part of a centromere complex consisting of CENPA, CENPT and CENPW. Identified in centromere complexes containing histones H2A, H2B and H4, and at least CENPA, CENPB, CENPC, CENPT, CENPN, HJURP, SUPT16H, SSRP1 and RSF1. Can self-associate. The CENPA-H4 heterotetramer can bind DNA by itself (in vitro). Interacts with CDK1, PPP1CA and RBBP7. Post-translationally, poly-ADP-ribosylated by PARP1. Trimethylated by NTMT1 at the N-terminal glycine after cleavage of Met-1. Methylation is low before incorporation into nucleosomes and increases with cell cycle progression, with the highest levels in mitotic nucleosomes. In terms of processing, phosphorylated by CDK1 at Ser-62 during early mitosis; this abolishes association with chromatin and centromeres, prevents interaction with HJURP and thereby prevents premature assembly of CENPA into centromeres. Dephosphorylated at Ser-62 by PPP1CA during late mitosis.

Its subcellular location is the nucleus. The protein resides in the chromosome. It is found in the centromere. Histone H3-like nucleosomal protein that is specifically found in centromeric nucleosomes. Replaces conventional H3 in the nucleosome core of centromeric chromatin that serves as an assembly site for the inner kinetochore. The presence of CENPA subtly modifies the nucleosome structure and the way DNA is wrapped around the nucleosome and gives rise to protruding DNA ends that are less well-ordered and rigid compared to nucleosomes containing histone H3. May serve as an epigenetic mark that propagates centromere identity through replication and cell division. Required for recruitment and assembly of kinetochore proteins, and as a consequence required for progress through mitosis, chromosome segregation and cytokinesis. This chain is Histone H3-like centromeric protein A (Cenpa), found in Mus musculus (Mouse).